A 211-amino-acid polypeptide reads, in one-letter code: RNA chaperone ProQ (211 aa).

The disordered stretch occupies residues 112–148 (ERRAVEKANNPKANKKRSVHHSGNKSENKKSAGKKFS). The segment covering 124–134 (ANKKRSVHHSG) has biased composition (basic residues).

The protein belongs to the ProQ family.

Its subcellular location is the cytoplasm. Its function is as follows. RNA chaperone with significant RNA binding, RNA strand exchange and RNA duplexing activities. The protein is RNA chaperone ProQ of Histophilus somni (strain 2336) (Haemophilus somnus).